The sequence spans 117 residues: Immunoglobulin kappa variable 1-17 (117 aa).

A signal peptide spans 1–22 (MDMRVPAQLLGLLLLWFPGARC). The interval 23 to 45 (DIQMTQSPSSLSASVGDRVTITC) is framework-1. The region spanning 24 to 117 (IQMTQSPSSL…YYCLQHNSYP (94 aa)) is the Ig-like domain. Residues C45 and C110 are joined by a disulfide bond. The tract at residues 46-56 (RASQGIRNDLG) is complementarity-determining-1. Residues 57–71 (WYQQKPGKAPKRLIY) are framework-2. A complementarity-determining-2 region spans residues 72–78 (AASSLQS). Positions 79–110 (GVPSRFSGSGSGTEFTLTISSLQPEDFATYYC) are framework-3. Residues 111–117 (LQHNSYP) are complementarity-determining-3.

In terms of assembly, immunoglobulins are composed of two identical heavy chains and two identical light chains; disulfide-linked.

It is found in the secreted. The protein resides in the cell membrane. V region of the variable domain of immunoglobulin light chains that participates in the antigen recognition. Immunoglobulins, also known as antibodies, are membrane-bound or secreted glycoproteins produced by B lymphocytes. In the recognition phase of humoral immunity, the membrane-bound immunoglobulins serve as receptors which, upon binding of a specific antigen, trigger the clonal expansion and differentiation of B lymphocytes into immunoglobulins-secreting plasma cells. Secreted immunoglobulins mediate the effector phase of humoral immunity, which results in the elimination of bound antigens. The antigen binding site is formed by the variable domain of one heavy chain, together with that of its associated light chain. Thus, each immunoglobulin has two antigen binding sites with remarkable affinity for a particular antigen. The variable domains are assembled by a process called V-(D)-J rearrangement and can then be subjected to somatic hypermutations which, after exposure to antigen and selection, allow affinity maturation for a particular antigen. This is Immunoglobulin kappa variable 1-17 from Homo sapiens (Human).